The primary structure comprises 92 residues: uncharacterized protein (92 aa).

The HTH arsR-type domain maps to 1 to 92 (MNGNKDAIFK…LKNLLKGWIE (92 aa)). The segment at residues 37 to 61 (IRLITKYDLSITRQAIAKHLSVLED) is a DNA-binding region (H-T-H motif).

This is an uncharacterized protein from Bacillus subtilis (strain 168).